The chain runs to 2742 residues: Neurobeachin-like protein 2 (2742 aa).

2 disordered regions span residues 1312 to 1333 and 1356 to 1434; these read ALSP…PSES and LERA…QQTP. Over residues 1384–1394 the composition is skewed to pro residues; sequence TPSPLDGPRPF. Positions 1421 to 1433 are enriched in polar residues; that stretch reads GDDTSNTSNPQQT. Phosphothreonine is present on Thr1855. Positions 1903 to 2028 constitute a BEACH-type PH domain; sequence EKREKLVLSA…LRNQVYSLLL (126 aa). Residues 2041–2333 form the BEACH domain; it reads RSPLEMLRAS…QLLKEPHPPR (293 aa). WD repeat units lie at residues 2374–2412, 2436–2479, 2482–2519, 2532–2570, 2577–2619, 2627–2662, and 2670–2705; these read LVLA…TWLP, KLLS…SLPR, LLNQ…VWRL, KPVQ…IHTV, AALR…TYSL, RLRA…ILHL, and PPLP…VGAG. Phosphoserine is present on residues Ser2727 and Ser2730.

Belongs to the WD repeat neurobeachin family.

Its subcellular location is the endoplasmic reticulum. Functionally, probably involved in thrombopoiesis. Plays a role in the development or secretion of alpha-granules, that contain several growth factors important for platelet biogenesis. The chain is Neurobeachin-like protein 2 (Nbeal2) from Mus musculus (Mouse).